A 54-amino-acid polypeptide reads, in one-letter code: Toxin AnmTx Cj 1c-1 (54 aa).

The signal sequence occupies residues 1-7 (MLNKRGV). 3 cysteine pairs are disulfide-bonded: Cys9/Cys50, Cys11/Cys41, and Cys33/Cys51. At Glu53 the chain carries Glutamic acid 1-amide.

Belongs to the sea anemone sodium channel inhibitory toxin family. Type I subfamily. Post-translationally, contains 3 disulfide bonds.

Its subcellular location is the secreted. It localises to the nematocyst. Functionally, in vivo, induces marked paralysis on shrimps (C.multidentata) at 10-20 seconds after injection and a weak toxicity when injected into insect larvae (M.domestica). In Epiactis japonica (Sea anemone), this protein is Toxin AnmTx Cj 1c-1.